Consider the following 121-residue polypeptide: NADH-ubiquinone oxidoreductase chain 3 (121 aa).

The next 3 helical transmembrane spans lie at 11–31 (ILIFFAISSLLSSVIFLLSYF), 63–83 (FYLVAILFLIFDLEISFLFPW), and 90–110 (ISIIGFWSMIVFLVILTIGFI).

The protein belongs to the complex I subunit 3 family.

It is found in the mitochondrion membrane. The catalysed reaction is a ubiquinone + NADH + 5 H(+)(in) = a ubiquinol + NAD(+) + 4 H(+)(out). In terms of biological role, core subunit of the mitochondrial membrane respiratory chain NADH dehydrogenase (Complex I) that is believed to belong to the minimal assembly required for catalysis. Complex I functions in the transfer of electrons from NADH to the respiratory chain. The immediate electron acceptor for the enzyme is believed to be ubiquinone. The polypeptide is NADH-ubiquinone oxidoreductase chain 3 (ND3) (Chondrus crispus (Carrageen Irish moss)).